Reading from the N-terminus, the 199-residue chain is Carbon disulfide hydrolase (199 aa).

Residues C36, H91, and C94 each contribute to the Zn(2+) site.

Belongs to the beta-class carbonic anhydrase family. As to quaternary structure, exists as both octamers and hexadecamers in solution. The hexadecameric homooligomer may form a catenane, through interactions of two interlocked octameric rings. Requires Zn(2+) as cofactor.

The enzyme catalyses carbon disulfide + 2 H2O = 2 hydrogen sulfide + CO2 + 2 H(+). It functions in the pathway sulfur metabolism; hydrogen sulfide biosynthesis. In terms of biological role, catalyzes the conversion of carbon disulfide into hydrogen sulfide and carbon dioxide, with carbonyl sulfide as an intermediate. Likely plays a key role in sulfur metabolism that allows A.thiooxidans G8 to grow on carbon disulfide as the main carbon and energy source. Does not show carbonic anhydrase activity (hydration of CO(2) to carbonate). In Acidithiobacillus thiooxidans (Thiobacillus thiooxidans), this protein is Carbon disulfide hydrolase.